A 406-amino-acid chain; its full sequence is DNA repair protein RAD55 (406 aa).

Position 43–50 (43–50) interacts with ATP; the sequence is GPPGIGKT. Positions 385 to 406 are disordered; sequence DSNDNPLPNAEGKEEIIYDSEG.

This sequence belongs to the RecA family. RAD55 subfamily.

The protein localises to the nucleus. In terms of biological role, required for radiation resistance and meiotic viability and presumably acts in recombination and recombinational DNA repair pathways. The polypeptide is DNA repair protein RAD55 (RAD55) (Saccharomyces cerevisiae (strain ATCC 204508 / S288c) (Baker's yeast)).